Here is a 225-residue protein sequence, read N- to C-terminus: Elongation factor 1-beta (225 aa).

The GST C-terminal domain occupies 2–84 (GFGDLKSPAG…ALGTYGPADV (83 aa)). The residue at position 7 (K7) is an N6-acetyllysine. S8 and S42 each carry phosphoserine. Residues 80–114 (GPADVEDTTGSGATDSKDDDDIDLFGSDDEEESEE) are disordered. Phosphothreonine is present on residues T88 and T93. S95 carries the phosphoserine modification. A compositionally biased stretch (acidic residues) spans 96–113 (KDDDDIDLFGSDDEEESE). Position 106 is a phosphoserine; by CK2 (S106). A Glycyl lysine isopeptide (Lys-Gly) (interchain with G-Cter in SUMO2) cross-link involves residue K147. S174 carries the post-translational modification Phosphoserine.

This sequence belongs to the EF-1-beta/EF-1-delta family. As to quaternary structure, EF-1 is composed of 4 subunits: alpha, beta (alpha subunit of the eEF1B subcomplex), delta (beta subunit of the eEF1B subcomplex), and gamma (gamma subunit of the eEF1B subcomplex). Interacts with elongation factor EEF1A1. Post-translationally, phosphorylation affects the GDP/GTP exchange rate.

Its function is as follows. Catalytic subunit of the guanine nucleotide exchange factor (GEF) (eEF1B subcomplex) of the eukaryotic elongation factor 1 complex (eEF1). Stimulates the exchange of GDP for GTP on elongation factor 1A (eEF1A), probably by displacing GDP from the nucleotide binding pocket in eEF1A. This Oryctolagus cuniculus (Rabbit) protein is Elongation factor 1-beta (EEF1B).